We begin with the raw amino-acid sequence, 357 residues long: MFDQLESIVGRYEELGELLSDPEVVSDTKRFMELSREEADLRDKVATYNEYKKVLETISDSEEMLGEGGLDDDMKEMLKEELSSAKSQKELLEEEIKILLLPKDPNDGKNIILEIRGAAGGDEAALFAGDLLNMYQHFSESQGWKFEIMEANITGIGGYKEVSALISGPSVYSKLKYESGAHRVQRVPVTETQGRVHTSTATVLVMPEVEEFEMTIDQKDLRVDIYHASGAGGQNVNKVATAVRMVHLPTGIKVEMQEERTQQKNRDKAIKLLNTKVFDYYQQIELDKQNAERKSTVGTGDRSERIRTYNFPQNRVTDHRIGLTLQKLDSILSGKMDEVIDALIVYDQTKKLEELNK.

Gln-234 is subject to N5-methylglutamine.

This sequence belongs to the prokaryotic/mitochondrial release factor family. Post-translationally, methylated by PrmC. Methylation increases the termination efficiency of RF1.

Its subcellular location is the cytoplasm. Functionally, peptide chain release factor 1 directs the termination of translation in response to the peptide chain termination codons UAG and UAA. The sequence is that of Peptide chain release factor 1 (prfA) from Lactococcus lactis subsp. lactis (strain IL1403) (Streptococcus lactis).